Consider the following 433-residue polypeptide: Agnestins efflux protein AgnL12 (433 aa).

2 stretches are compositionally biased toward polar residues: residues 1–10 (MSRSTSTELQ) and 25–40 (SIAS…PPST). The segment at 1-40 (MSRSTSTELQQELPASKEVPPDPTSIASSETASGSKPPST) is disordered. A run of 12 helical transmembrane segments spans residues 47–67 (ILVL…TNAF), 87–107 (ISWI…ISGY), 116–136 (LLIC…SLST), 141–161 (IFLT…LPAM), 174–194 (LAMG…PIAL), 205–225 (WTVR…CLAI), 248–268 (VMIF…SPFF), 285–305 (FYMV…PGLI), 309–329 (VGNY…ACCW), 335–355 (VGGI…VISL), 370–390 (GVAM…GTPI), and 401–421 (LGLS…ILLA).

Belongs to the major facilitator superfamily. Monocarboxylate porter (TC 2.A.1.13) family.

It localises to the cell membrane. Functionally, efflux pump that may be involved in the secretion of agnestins, dihydroxy-xanthone metabolites. This chain is Agnestins efflux protein AgnL12, found in Paecilomyces divaricatus (Penicillium divaricatum).